The primary structure comprises 105 residues: Large ribosomal subunit protein bL21 (105 aa).

The protein belongs to the bacterial ribosomal protein bL21 family. As to quaternary structure, part of the 50S ribosomal subunit. Contacts protein L20.

This protein binds to 23S rRNA in the presence of protein L20. The chain is Large ribosomal subunit protein bL21 from Blochmanniella pennsylvanica (strain BPEN).